The primary structure comprises 254 residues: 3-oxo-5-alpha-steroid 4-dehydrogenase 2 (254 aa).

4 helical membrane-spanning segments follow: residues 8-28 (SPVL…LYFA), 72-92 (PRSL…AHYF), 146-166 (FSLG…SDYI), and 206-226 (LATW…FLGL).

Belongs to the steroid 5-alpha reductase family.

Its subcellular location is the microsome membrane. The protein localises to the endoplasmic reticulum membrane. It carries out the reaction a 3-oxo-5alpha-steroid + NADP(+) = a 3-oxo-Delta(4)-steroid + NADPH + H(+). The enzyme catalyses 17beta-hydroxy-5alpha-androstan-3-one + NADP(+) = testosterone + NADPH + H(+). It catalyses the reaction 5alpha-pregnane-3,20-dione + NADP(+) = progesterone + NADPH + H(+). In terms of biological role, converts testosterone (T) into 5-alpha-dihydrotestosterone (DHT) and progesterone or corticosterone into their corresponding 5-alpha-3-oxosteroids. It plays a central role in sexual differentiation and androgen physiology. The chain is 3-oxo-5-alpha-steroid 4-dehydrogenase 2 (SRD5A2) from Sus scrofa (Pig).